The sequence spans 148 residues: Transcriptional regulator MraZ (148 aa).

2 SpoVT-AbrB domains span residues 5–51 (ATSL…PLPA) and 80–123 (AEDV…SMEA).

Belongs to the MraZ family. Forms oligomers.

Its subcellular location is the cytoplasm. It localises to the nucleoid. The sequence is that of Transcriptional regulator MraZ from Methylobacillus flagellatus (strain ATCC 51484 / DSM 6875 / VKM B-1610 / KT).